A 190-amino-acid chain; its full sequence is Holliday junction branch migration complex subunit RuvA (190 aa).

Residues 1–64 (MIGKLSGTLD…EDAQILYGFA (64 aa)) form a domain I region. A domain II region spans residues 65–137 (TSQERAAFRE…LKGKLGPDIG (73 aa)). A flexible linker region spans residues 137–141 (GVAAS). The tract at residues 142-190 (VANDSQADILQALLALGYSDKEAAAALKALPSDVGVSEGIRLALRALGK) is domain III.

This sequence belongs to the RuvA family. Homotetramer. Forms an RuvA(8)-RuvB(12)-Holliday junction (HJ) complex. HJ DNA is sandwiched between 2 RuvA tetramers; dsDNA enters through RuvA and exits via RuvB. An RuvB hexamer assembles on each DNA strand where it exits the tetramer. Each RuvB hexamer is contacted by two RuvA subunits (via domain III) on 2 adjacent RuvB subunits; this complex drives branch migration. In the full resolvosome a probable DNA-RuvA(4)-RuvB(12)-RuvC(2) complex forms which resolves the HJ.

It localises to the cytoplasm. Functionally, the RuvA-RuvB-RuvC complex processes Holliday junction (HJ) DNA during genetic recombination and DNA repair, while the RuvA-RuvB complex plays an important role in the rescue of blocked DNA replication forks via replication fork reversal (RFR). RuvA specifically binds to HJ cruciform DNA, conferring on it an open structure. The RuvB hexamer acts as an ATP-dependent pump, pulling dsDNA into and through the RuvAB complex. HJ branch migration allows RuvC to scan DNA until it finds its consensus sequence, where it cleaves and resolves the cruciform DNA. This is Holliday junction branch migration complex subunit RuvA from Albidiferax ferrireducens (strain ATCC BAA-621 / DSM 15236 / T118) (Rhodoferax ferrireducens).